The chain runs to 101 residues: uncharacterized protein (101 aa).

A helical transmembrane segment spans residues 70 to 90; sequence VLFIPIILLLPPSCPLTGVTV.

It is found in the membrane. This is an uncharacterized protein from Saccharomyces cerevisiae (strain ATCC 204508 / S288c) (Baker's yeast).